Reading from the N-terminus, the 300-residue chain is Acetylglutamate kinase (300 aa).

Substrate is bound by residues 72-73, Arg-94, and Asn-197; that span reads GG.

Belongs to the acetylglutamate kinase family. ArgB subfamily.

It is found in the cytoplasm. The enzyme catalyses N-acetyl-L-glutamate + ATP = N-acetyl-L-glutamyl 5-phosphate + ADP. Its pathway is amino-acid biosynthesis; L-arginine biosynthesis; N(2)-acetyl-L-ornithine from L-glutamate: step 2/4. Functionally, catalyzes the ATP-dependent phosphorylation of N-acetyl-L-glutamate. The polypeptide is Acetylglutamate kinase (Aromatoleum aromaticum (strain DSM 19018 / LMG 30748 / EbN1) (Azoarcus sp. (strain EbN1))).